A 256-amino-acid chain; its full sequence is Alcohol dehydrogenase (256 aa).

12-35 (FVAGLGGIGLDTSKELVKRDLKNL) provides a ligand contact to NAD(+). Ser-140 lines the substrate pocket. Tyr-153 acts as the Proton acceptor in catalysis.

It belongs to the short-chain dehydrogenases/reductases (SDR) family. Homodimer.

It carries out the reaction a primary alcohol + NAD(+) = an aldehyde + NADH + H(+). The enzyme catalyses a secondary alcohol + NAD(+) = a ketone + NADH + H(+). This Drosophila tsacasi (Fruit fly) protein is Alcohol dehydrogenase (Adh).